The sequence spans 34 residues: Photosystem II reaction center protein M (34 aa).

The helical transmembrane segment at 5 to 25 (ILAFIATALFILIPTAFLLII) threads the bilayer.

Belongs to the PsbM family. As to quaternary structure, PSII is composed of 1 copy each of membrane proteins PsbA, PsbB, PsbC, PsbD, PsbE, PsbF, PsbH, PsbI, PsbJ, PsbK, PsbL, PsbM, PsbT, PsbX, PsbY, PsbZ, Psb30/Ycf12, at least 3 peripheral proteins of the oxygen-evolving complex and a large number of cofactors. It forms dimeric complexes.

It is found in the plastid. Its subcellular location is the chloroplast thylakoid membrane. Functionally, one of the components of the core complex of photosystem II (PSII). PSII is a light-driven water:plastoquinone oxidoreductase that uses light energy to abstract electrons from H(2)O, generating O(2) and a proton gradient subsequently used for ATP formation. It consists of a core antenna complex that captures photons, and an electron transfer chain that converts photonic excitation into a charge separation. This subunit is found at the monomer-monomer interface. The chain is Photosystem II reaction center protein M from Agrostis stolonifera (Creeping bentgrass).